Consider the following 262-residue polypeptide: tRNA pseudouridine synthase A (262 aa).

The Nucleophile role is filled by aspartate 52. Tyrosine 103 is a binding site for substrate.

Belongs to the tRNA pseudouridine synthase TruA family.

It catalyses the reaction uridine(38/39/40) in tRNA = pseudouridine(38/39/40) in tRNA. In terms of biological role, formation of pseudouridine at positions 38, 39 and 40 in the anticodon stem and loop of transfer RNAs. This Methanococcus maripaludis (strain C6 / ATCC BAA-1332) protein is tRNA pseudouridine synthase A.